We begin with the raw amino-acid sequence, 570 residues long: Glutamate--tRNA ligase (570 aa).

A 'HIGH' region motif is present at residues 107 to 117 (PNPDFVLHLGS).

It belongs to the class-I aminoacyl-tRNA synthetase family. Glutamate--tRNA ligase type 2 subfamily.

It localises to the cytoplasm. The catalysed reaction is tRNA(Glu) + L-glutamate + ATP = L-glutamyl-tRNA(Glu) + AMP + diphosphate. Functionally, catalyzes the attachment of glutamate to tRNA(Glu) in a two-step reaction: glutamate is first activated by ATP to form Glu-AMP and then transferred to the acceptor end of tRNA(Glu). This Pyrobaculum aerophilum (strain ATCC 51768 / DSM 7523 / JCM 9630 / CIP 104966 / NBRC 100827 / IM2) protein is Glutamate--tRNA ligase.